We begin with the raw amino-acid sequence, 314 residues long: 2,3-dihydroxyphenylpropionate/2,3-dihydroxicinnamic acid 1,2-dioxygenase 1 (314 aa).

The Proton donor role is filled by H115. Residue H179 is the Proton acceptor of the active site.

Belongs to the LigB/MhpB extradiol dioxygenase family. Homotetramer. It depends on Fe(2+) as a cofactor.

The enzyme catalyses 3-(2,3-dihydroxyphenyl)propanoate + O2 = (2Z,4E)-2-hydroxy-6-oxonona-2,4-dienedioate + H(+). The catalysed reaction is (2E)-3-(2,3-dihydroxyphenyl)prop-2-enoate + O2 = (2Z,4E,7E)-2-hydroxy-6-oxonona-2,4,7-trienedioate + H(+). It participates in aromatic compound metabolism; 3-phenylpropanoate degradation. In terms of biological role, catalyzes the non-heme iron(II)-dependent oxidative cleavage of 2,3-dihydroxyphenylpropionic acid and 2,3-dihydroxicinnamic acid into 2-hydroxy-6-ketononadienedioate and 2-hydroxy-6-ketononatrienedioate, respectively. This is 2,3-dihydroxyphenylpropionate/2,3-dihydroxicinnamic acid 1,2-dioxygenase 1 from Pseudomonas putida (Arthrobacter siderocapsulatus).